Here is a 37-residue protein sequence, read N- to C-terminus: Large ribosomal subunit protein bL36 (37 aa).

The protein belongs to the bacterial ribosomal protein bL36 family.

This Nitratidesulfovibrio vulgaris (strain ATCC 29579 / DSM 644 / CCUG 34227 / NCIMB 8303 / VKM B-1760 / Hildenborough) (Desulfovibrio vulgaris) protein is Large ribosomal subunit protein bL36.